A 280-amino-acid chain; its full sequence is Four and a half LIM domains protein 3 (280 aa).

An N-acetylserine modification is found at Ser-2. The C4-type zinc-finger motif lies at 7–31; sequence CAKCNESLYGRKYIQTDSGPYCVPC. 2 LIM zinc-binding domains span residues 40-92 and 101-153; these read CAEC…CNDC and CSAC…CVPC. An N6-acetyllysine modification is found at Lys-157. 2 LIM zinc-binding domains span residues 162 to 212 and 221 to 275; these read CARC…CVAC and CSSC…CQGC. Lys-235 bears the N6-acetyllysine mark.

In terms of assembly, interacts with SOX15; the interaction recruits FHL3 to FOXK1 promoters where it acts as a transcriptional coactivator of FOXK1. In terms of tissue distribution, expressed only in skeletal muscle.

It is found in the nucleus. The protein localises to the cytoplasm. Its function is as follows. Recruited by SOX15 to FOXK1 promoters where it acts as a transcriptional coactivator of FOXK1. This Homo sapiens (Human) protein is Four and a half LIM domains protein 3 (FHL3).